Here is a 76-residue protein sequence, read N- to C-terminus: Toxin Acra III-1 (76 aa).

The 64-residue stretch at 4 to 67 (PGNYPLDTRG…IWDAVKNHCT (64 aa)) folds into the LCN-type CS-alpha/beta domain. Cystine bridges form between Cys18/Cys41, Cys27/Cys46, and Cys31/Cys48.

This sequence belongs to the long (3 C-C) scorpion toxin superfamily. Sodium channel inhibitor family. Beta subfamily. Expressed by the venom gland.

It localises to the secreted. Binds to sodium channels (Nav) and affects the channel activation process. The chain is Toxin Acra III-1 from Androctonus crassicauda (Arabian fat-tailed scorpion).